Reading from the N-terminus, the 450-residue chain is Protein tweety homolog 1 (450 aa).

Over 1–43 (MGAPPGYRPSAWVHLLHQLPRADFQLRPVPSGFAPRDQEYQQA) the chain is Extracellular. The helical transmembrane segment at 44 to 64 (LLLVAALAGLGLGLSLIFIAV) threads the bilayer. Over 65-88 (YLIRFCCCRPPEPHGAKSPPPGGG) the chain is Cytoplasmic. A helical membrane pass occupies residues 89–109 (CVTWSCIAALLVGCAGIGIGF). At 110–214 (YGNSETSDGV…DVTFVEEYRW (105 aa)) the chain is on the extracellular side. N-linked (GlcNAc...) asparagine glycosylation is present at N130. The helical transmembrane segment at 215–235 (LAYVLLLLLVLLVCLFTLLGL) threads the bilayer. The Cytoplasmic portion of the chain corresponds to 236-240 (AKQSK). A helical membrane pass occupies residues 241–261 (WLVVVMTAMSLLVLVLSWGSM). Residues 262 to 390 (GLEAATAVGL…LRGLCEDALE (129 aa)) are Extracellular-facing. Disulfide bonds link C275–C385 and C303–C370. 2 N-linked (GlcNAc...) asparagine glycosylation sites follow: N284 and N355. The chain crosses the membrane as a helical span at residues 391 to 411 (GLLFLMLFSLLSAGALATTLC). Residues 412–450 (SLPRAWALFPPSDDYDDTDDDDPFNPQESKRFVQWQSSI) are Cytoplasmic-facing. Residues 428 to 450 (DTDDDDPFNPQESKRFVQWQSSI) are disordered. S440 carries the phosphoserine modification.

The protein belongs to the tweety family. In terms of assembly, homotetramer; disulfide-linked. Homodimer. Post-translationally, N-glycosylated. Contains high-mannose, hybrid and complex oligosaccharides. In terms of tissue distribution, expressed in the astrocytes (at protein level). Restricted mainly to neural tissues. Strongly expressed in brain and eye.

The protein resides in the cell membrane. It catalyses the reaction chloride(in) = chloride(out). It carries out the reaction L-glutamate(out) = L-glutamate(in). Its activity is regulated as follows. Inhibited by (4-[(2-butyl-6,7-dichloro-2- cyclopentyl-2,3-dihydro-1-oxo-1H-inden-5-yl)oxy]butanoic acid). Calcium-independent, swelling-dependent volume-regulated anion channel (VRAC-swell) which plays a pivotal role in the process of regulatory volume decrease (RVD) in the brain through the efflux of anions like chloride and organic osmolytes like glutamate. The sequence is that of Protein tweety homolog 1 (Ttyh1) from Mus musculus (Mouse).